Here is a 708-residue protein sequence, read N- to C-terminus: Polyribonucleotide nucleotidyltransferase (708 aa).

Mg(2+) contacts are provided by aspartate 487 and aspartate 493. The region spanning 554-613 is the KH domain; that stretch reads PRIHTMKISADKIKDVIGKGGAVIRALTEETGTTIEIEDDGTIKIAATEGAAAKEAIRRI. The S1 motif domain maps to 623–691; the sequence is GVIYTGKVAR…RQGRVRLSMK (69 aa).

It belongs to the polyribonucleotide nucleotidyltransferase family. In terms of assembly, component of the RNA degradosome, which is a multiprotein complex involved in RNA processing and mRNA degradation. Mg(2+) serves as cofactor.

It localises to the cytoplasm. It carries out the reaction RNA(n+1) + phosphate = RNA(n) + a ribonucleoside 5'-diphosphate. In terms of biological role, involved in mRNA degradation. Catalyzes the phosphorolysis of single-stranded polyribonucleotides processively in the 3'- to 5'-direction. This is Polyribonucleotide nucleotidyltransferase from Vibrio vulnificus (strain CMCP6).